The primary structure comprises 272 residues: S-adenosylmethionine decarboxylase proenzyme (272 aa).

Residue Ser-122 is the Schiff-base intermediate with substrate; via pyruvic acid of the active site. Ser-122 is modified (pyruvic acid (Ser); by autocatalysis). Catalysis depends on His-127, which acts as the Proton acceptor; for processing activity. Cys-150 functions as the Proton donor; for catalytic activity in the catalytic mechanism.

The protein belongs to the prokaryotic AdoMetDC family. Type 2 subfamily. In terms of assembly, heterooctamer of four alpha and four beta chains arranged as a tetramer of alpha/beta heterodimers. It depends on pyruvate as a cofactor. Post-translationally, is synthesized initially as an inactive proenzyme. Formation of the active enzyme involves a self-maturation process in which the active site pyruvoyl group is generated from an internal serine residue via an autocatalytic post-translational modification. Two non-identical subunits are generated from the proenzyme in this reaction, and the pyruvate is formed at the N-terminus of the alpha chain, which is derived from the carboxyl end of the proenzyme. The post-translation cleavage follows an unusual pathway, termed non-hydrolytic serinolysis, in which the side chain hydroxyl group of the serine supplies its oxygen atom to form the C-terminus of the beta chain, while the remainder of the serine residue undergoes an oxidative deamination to produce ammonia and the pyruvoyl group blocking the N-terminus of the alpha chain.

The enzyme catalyses S-adenosyl-L-methionine + H(+) = S-adenosyl 3-(methylsulfanyl)propylamine + CO2. Its pathway is amine and polyamine biosynthesis; S-adenosylmethioninamine biosynthesis; S-adenosylmethioninamine from S-adenosyl-L-methionine: step 1/1. Catalyzes the decarboxylation of S-adenosylmethionine to S-adenosylmethioninamine (dcAdoMet), the propylamine donor required for the synthesis of the polyamines spermine and spermidine from the diamine putrescine. The sequence is that of S-adenosylmethionine decarboxylase proenzyme from Clostridium botulinum (strain Eklund 17B / Type B).